A 342-amino-acid chain; its full sequence is Ribosomal RNA small subunit methyltransferase H (342 aa).

S-adenosyl-L-methionine is bound by residues 36–38 (GGH), aspartate 56, phenylalanine 82, aspartate 100, and glutamine 107. Residues 309–342 (ENRESGMGKGHGAAASRFPTPDSRFPTSPNGDAP) form a disordered region. Residues 333–342 (FPTSPNGDAP) are compositionally biased toward polar residues.

It belongs to the methyltransferase superfamily. RsmH family.

It localises to the cytoplasm. It carries out the reaction cytidine(1402) in 16S rRNA + S-adenosyl-L-methionine = N(4)-methylcytidine(1402) in 16S rRNA + S-adenosyl-L-homocysteine + H(+). Specifically methylates the N4 position of cytidine in position 1402 (C1402) of 16S rRNA. The polypeptide is Ribosomal RNA small subunit methyltransferase H (Xanthomonas campestris pv. campestris (strain B100)).